Reading from the N-terminus, the 249-residue chain is MRVVTAKSIKKNRYNRMFAEEDLYSMLEEMGNTQQMINKFQKKRITQTILLSFFGLLLGLFFTSWCYLLALGLPFFFYRSKYTHVTKTYNAFKFERHLNFSKFTRLLIPYLKESGESTSLYQVFRKILNRMDNPVDKNSLAKLMSEMTDKPNDIQPFTDYAMRSSGSDMSINIMQTIYDFQQNSSDTNVINELGQMASAELQRAIDEIIAFKLRRFNFFPTKIVMSSFILVVGFAAAVLVHHLSSINLS.

Transmembrane regions (helical) follow at residues 49–69 (ILLS…CYLL) and 223–243 (IVMS…VHHL).

It localises to the cell membrane. This is an uncharacterized protein from Bacillus anthracis.